The chain runs to 526 residues: ATP synthase subunit alpha (526 aa).

An ATP-binding site is contributed by 171 to 178 (GDRQTGKT).

Belongs to the ATPase alpha/beta chains family. F-type ATPases have 2 components, CF(1) - the catalytic core - and CF(0) - the membrane proton channel. CF(1) has five subunits: alpha(3), beta(3), gamma(1), delta(1), epsilon(1). CF(0) has four main subunits: a(1), b(1), b'(1) and c(9-12).

Its subcellular location is the cell inner membrane. The catalysed reaction is ATP + H2O + 4 H(+)(in) = ADP + phosphate + 5 H(+)(out). Produces ATP from ADP in the presence of a proton gradient across the membrane. The alpha chain is a regulatory subunit. The protein is ATP synthase subunit alpha of Chlorobium phaeovibrioides (strain DSM 265 / 1930) (Prosthecochloris vibrioformis (strain DSM 265)).